We begin with the raw amino-acid sequence, 219 residues long: Probable nicotinate-nucleotide adenylyltransferase (219 aa).

This sequence belongs to the NadD family.

It carries out the reaction nicotinate beta-D-ribonucleotide + ATP + H(+) = deamido-NAD(+) + diphosphate. Its pathway is cofactor biosynthesis; NAD(+) biosynthesis; deamido-NAD(+) from nicotinate D-ribonucleotide: step 1/1. Its function is as follows. Catalyzes the reversible adenylation of nicotinate mononucleotide (NaMN) to nicotinic acid adenine dinucleotide (NaAD). This chain is Probable nicotinate-nucleotide adenylyltransferase, found in Pseudomonas putida (strain W619).